Reading from the N-terminus, the 50-residue chain is U-megalopygitoxin(9)-Mo13 (50 aa).

A signal peptide spans 1 to 23 (MKLVFLFFIVAVMVSLFVGMTEA). Cysteine 33 and cysteine 40 are oxidised to a cystine.

Belongs to the caterpillar 9 family. As to expression, expressed by the venom apparatus.

It is found in the secreted. In terms of biological role, probable toxin. The polypeptide is U-megalopygitoxin(9)-Mo13 (Megalopyge opercularis (Southern flannel moth)).